Consider the following 913-residue polypeptide: ER degradation-enhancing alpha-mannosidase-like protein 3 (913 aa).

Positions 1-15 (MGCPAVEARRWGDMW) are cleaved as a signal peptide. Asn-104 is a glycosylation site (N-linked (GlcNAc...) asparagine). Glu-132 acts as the Proton donor in catalysis. N-linked (GlcNAc...) asparagine glycosylation occurs at Asn-181. Residue Asp-279 is part of the active site. Catalysis depends on Glu-373, which acts as the Proton donor. Glu-391 is an active-site residue. Thr-477 contributes to the Ca(2+) binding site. N-linked (GlcNAc...) asparagine glycosylation is present at Asn-497. A PA domain is found at 660–766 (LSKHLAGAQG…KEGNIILDAI (107 aa)). Asn-797 carries N-linked (GlcNAc...) asparagine glycosylation. The segment at 823 to 895 (EESPVSQPEV…NKVQPMESIL (73 aa)) is disordered. Residues 826–839 (PVSQPEVPSSDSPS) show a composition bias toward low complexity. The span at 843–866 (RTSERDITPESQEHKTEETEHSPK) shows a compositional bias: basic and acidic residues. The Prevents secretion from ER signature appears at 910 to 913 (KDEL).

It belongs to the glycosyl hydrolase 47 family. Requires Ca(2+) as cofactor.

The protein localises to the endoplasmic reticulum lumen. It carries out the reaction N(4)-(alpha-D-Man-(1-&gt;2)-alpha-D-Man-(1-&gt;2)-alpha-D-Man-(1-&gt;3)-[alpha-D-Man-(1-&gt;2)-alpha-D-Man-(1-&gt;3)-[alpha-D-Man-(1-&gt;2)-alpha-D-Man-(1-&gt;6)]-alpha-D-Man-(1-&gt;6)]-beta-D-Man-(1-&gt;4)-beta-D-GlcNAc-(1-&gt;4)-beta-D-GlcNAc)-L-asparaginyl-[protein] (N-glucan mannose isomer 9A1,2,3B1,2,3) + 4 H2O = N(4)-(alpha-D-Man-(1-&gt;3)-[alpha-D-Man-(1-&gt;3)-[alpha-D-Man-(1-&gt;6)]-alpha-D-Man-(1-&gt;6)]-beta-D-Man-(1-&gt;4)-beta-D-GlcNAc-(1-&gt;4)-beta-D-GlcNAc)-L-asparaginyl-[protein] (N-glucan mannose isomer 5A1,2) + 4 beta-D-mannose. It catalyses the reaction N(4)-(alpha-D-Man-(1-&gt;2)-alpha-D-Man-(1-&gt;2)-alpha-D-Man-(1-&gt;3)-[alpha-D-Man-(1-&gt;3)-[alpha-D-Man-(1-&gt;2)-alpha-D-Man-(1-&gt;6)]-alpha-D-Man-(1-&gt;6)]-beta-D-Man-(1-&gt;4)-beta-D-GlcNAc-(1-&gt;4)-beta-D-GlcNAc)-L-asparaginyl-[protein] (N-glucan mannose isomer 8A1,2,3B1,3) + 3 H2O = N(4)-(alpha-D-Man-(1-&gt;3)-[alpha-D-Man-(1-&gt;3)-[alpha-D-Man-(1-&gt;6)]-alpha-D-Man-(1-&gt;6)]-beta-D-Man-(1-&gt;4)-beta-D-GlcNAc-(1-&gt;4)-beta-D-GlcNAc)-L-asparaginyl-[protein] (N-glucan mannose isomer 5A1,2) + 3 beta-D-mannose. It functions in the pathway protein modification; protein glycosylation. In terms of biological role, may be involved in endoplasmic reticulum-associated degradation (ERAD). This Xenopus laevis (African clawed frog) protein is ER degradation-enhancing alpha-mannosidase-like protein 3 (edem3).